Consider the following 514-residue polypeptide: G-protein coupled receptor Mth (514 aa).

Positions 1 to 24 are cleaved as a signal peptide; it reads MKTLLVLRISTVILVVLVIQKSYA. Residues 25-218 lie on the Extracellular side of the membrane; sequence DILECDYFDT…CLIVPSITGQ (194 aa). 5 disulfides stabilise this stretch: Cys-29–Cys-83, Cys-85–Cys-90, Cys-94–Cys-188, Cys-95–Cys-106, and Cys-150–Cys-209. Residue Asn-45 is glycosylated (N-linked (GlcNAc...) asparagine). N-linked (GlcNAc...) asparagine glycosylation is found at Asn-109, Asn-123, Asn-170, and Asn-198. Residues 219-239 form a helical membrane-spanning segment; it reads TVVMISSLICMVLTIAVYLFV. Residues 240–248 are Cytoplasmic-facing; the sequence is KKLQNLHGK. Residues 249-269 form a helical membrane-spanning segment; sequence CFICYMVCLFMGYLFLLLDLW. Topologically, residues 270–278 are extracellular; sequence QISISFCKP. The helical transmembrane segment at 279 to 299 threads the bilayer; the sequence is AGFLGYFFVMAAFFWLSVISL. Residues 300-320 are Cytoplasmic-facing; sequence HLWNTFRGSSHKANRFLFEHR. A helical transmembrane segment spans residues 321 to 341; that stretch reads FLAYNTYAWGMAVVLTGITVL. Topologically, residues 342–370 are extracellular; that stretch reads ADNIVENQDWNPRVGHEGHCWIYTQAWSA. The chain crosses the membrane as a helical span at residues 371–391; it reads MLYFYGPMVFLIAFNITMFIL. Topologically, residues 392-424 are cytoplasmic; sequence TAKRILGVKKDIQNFAHRQERKQKLNSDKQTYT. The helical transmembrane segment at 425-445 threads the bilayer; it reads FFLRLFIIMGLSWSLEIGSYF. Residues 446 to 454 are Extracellular-facing; that stretch reads SQSNQTWAN. Residue Asn-449 is glycosylated (N-linked (GlcNAc...) asparagine). The chain crosses the membrane as a helical span at residues 455–475; sequence VFLVADYLNWSQGIIIFILFV. The Cytoplasmic portion of the chain corresponds to 476–514; the sequence is LKRSTWRLLQESIRGEGEEVNNSEEEISLENTTTRNVLL.

The protein belongs to the G-protein coupled receptor 2 family. Mth subfamily. In terms of assembly, homodimer.

The protein resides in the cell membrane. Involved in biological aging and stress response. Essential for adult survival. Required in the presynaptic motor neuron to up-regulate neurotransmitter exocytosis at larval glutamatergic neuromuscular junctions (NMJs). Regulates a step associated with docking and clustering of vesicles at release sites. SP/Acp70A and sun are agonists that activate mth in vitro. The chain is G-protein coupled receptor Mth (mth) from Drosophila melanogaster (Fruit fly).